The sequence spans 90 residues: Small ribosomal subunit protein bS20 (90 aa).

The disordered stretch occupies residues 1-25 (MANSPSAKKRAKQAEKRRSHNASLR). The span at 7–20 (AKKRAKQAEKRRSH) shows a compositional bias: basic residues.

It belongs to the bacterial ribosomal protein bS20 family.

In terms of biological role, binds directly to 16S ribosomal RNA. In Pseudomonas fluorescens (strain Pf0-1), this protein is Small ribosomal subunit protein bS20.